Here is a 238-residue protein sequence, read N- to C-terminus: Ditrans,polycis-undecaprenyl-diphosphate synthase ((2E,6E)-farnesyl-diphosphate specific) (238 aa).

Aspartate 14 is a catalytic residue. Aspartate 14 serves as a coordination point for Mg(2+). Substrate contacts are provided by residues 15-18 (GNGR), tryptophan 19, arginine 27, histidine 31, and 59-61 (SSE). The active-site Proton acceptor is the asparagine 62. Substrate-binding positions include tryptophan 63, arginine 65, arginine 182, and 188–190 (RIS). Glutamate 201 provides a ligand contact to Mg(2+).

Belongs to the UPP synthase family. In terms of assembly, homodimer. Mg(2+) serves as cofactor.

It carries out the reaction 8 isopentenyl diphosphate + (2E,6E)-farnesyl diphosphate = di-trans,octa-cis-undecaprenyl diphosphate + 8 diphosphate. Functionally, catalyzes the sequential condensation of isopentenyl diphosphate (IPP) with (2E,6E)-farnesyl diphosphate (E,E-FPP) to yield (2Z,6Z,10Z,14Z,18Z,22Z,26Z,30Z,34E,38E)-undecaprenyl diphosphate (di-trans,octa-cis-UPP). UPP is the precursor of glycosyl carrier lipid in the biosynthesis of bacterial cell wall polysaccharide components such as peptidoglycan and lipopolysaccharide. This Legionella pneumophila (strain Paris) protein is Ditrans,polycis-undecaprenyl-diphosphate synthase ((2E,6E)-farnesyl-diphosphate specific).